A 455-amino-acid polypeptide reads, in one-letter code: Serine--tRNA ligase (455 aa).

L-serine is bound at residue 252–254 (TAE). Residues 283–285 (RKE) and valine 299 each bind ATP. Glutamate 306 serves as a coordination point for L-serine. 370–373 (EVVS) serves as a coordination point for ATP. Threonine 406 contributes to the L-serine binding site.

It belongs to the class-II aminoacyl-tRNA synthetase family. Type-1 seryl-tRNA synthetase subfamily. In terms of assembly, homodimer. The tRNA molecule binds across the dimer.

It localises to the cytoplasm. It carries out the reaction tRNA(Ser) + L-serine + ATP = L-seryl-tRNA(Ser) + AMP + diphosphate + H(+). The catalysed reaction is tRNA(Sec) + L-serine + ATP = L-seryl-tRNA(Sec) + AMP + diphosphate + H(+). The protein operates within aminoacyl-tRNA biosynthesis; selenocysteinyl-tRNA(Sec) biosynthesis; L-seryl-tRNA(Sec) from L-serine and tRNA(Sec): step 1/1. Functionally, catalyzes the attachment of serine to tRNA(Ser). Is also able to aminoacylate tRNA(Sec) with serine, to form the misacylated tRNA L-seryl-tRNA(Sec), which will be further converted into selenocysteinyl-tRNA(Sec). This chain is Serine--tRNA ligase, found in Pyrococcus horikoshii (strain ATCC 700860 / DSM 12428 / JCM 9974 / NBRC 100139 / OT-3).